We begin with the raw amino-acid sequence, 136 residues long: Holo-[acyl-carrier-protein] synthase (136 aa).

Mg(2+) is bound by residues Asp8 and Glu57.

Belongs to the P-Pant transferase superfamily. AcpS family. Mg(2+) is required as a cofactor.

It is found in the cytoplasm. The enzyme catalyses apo-[ACP] + CoA = holo-[ACP] + adenosine 3',5'-bisphosphate + H(+). Functionally, transfers the 4'-phosphopantetheine moiety from coenzyme A to a Ser of acyl-carrier-protein. In Methylorubrum extorquens (strain CM4 / NCIMB 13688) (Methylobacterium extorquens), this protein is Holo-[acyl-carrier-protein] synthase.